The sequence spans 249 residues: Probable transcriptional regulatory protein LBJ_0543 (249 aa).

Belongs to the TACO1 family.

It localises to the cytoplasm. This is Probable transcriptional regulatory protein LBJ_0543 from Leptospira borgpetersenii serovar Hardjo-bovis (strain JB197).